The chain runs to 538 residues: Retinoblastoma-binding protein 5 (538 aa).

WD repeat units follow at residues 22–63 and 64–103; these read DCIS…KIIS and AHIH…CDQR. Lys129 participates in a covalent cross-link: Glycyl lysine isopeptide (Lys-Gly) (interchain with G-Cter in SUMO2). WD repeat units follow at residues 148–188, 196–235, 249–291, and 293–331; these read DDDS…LVAS, SNTT…TCGR, VNRT…KILH, and TRGE…NWSA. Position 252 is a phosphothreonine; by CDK1 (Thr252). Residues 330-366 form an interaction with ASH2L region; that stretch reads SAFAPDFKELDENVEYEERESEFDIEDEDKSEPEQTG. Over residues 344-360 the composition is skewed to acidic residues; that stretch reads EYEERESEFDIEDEDKS. The segment at 344–377 is disordered; sequence EYEERESEFDIEDEDKSEPEQTGADAAEDEEVDV. Ser350 carries the post-translational modification Phosphoserine. The segment at 371 to 380 is interaction with WDR5; it reads EDEEVDVTSV. 2 positions are modified to phosphoserine: Ser388 and Ser389. The segment at 408 to 519 is disordered; the sequence is VEDPEENPYG…LPLEGSTKGK (112 aa). Residues 479–490 are compositionally biased toward basic residues; sequence SKKKQAGRPKGS. A compositionally biased stretch (basic and acidic residues) spans 491–510; that stretch reads KGKEKDSPFKPKLYKGDRGL. Position 497 is a phosphoserine; by CDK1 (Ser497). Ser525 carries the post-translational modification Phosphoserine.

In terms of assembly, component of the SET1 complex, at least composed of the catalytic subunit (SETD1A or SETD1B), WDR5, WDR82, RBBP5, ASH2L/ASH2, CXXC1/CFP1, HCFC1 and DPY30. Core component of several methyltransferase-containing complexes including MLL1/MLL, MLL2/3 (also named ASCOM complex) and MLL4/WBP7. Each complex is at least composed of ASH2L, RBBP5, WDR5, DPY30, one or more specific histone methyltransferases (KMT2A/MLL1, KMT2D/MLL2, KMT2C/MLL3 and KMT2B/MLL4), and the facultative components PAGR1, BACC1, CHD8, E2F6, HCFC1, HCFC2, HSP70, INO80C, KDM6A, KANSL1, LAS1L, MAX, MCRS1, MEN1, MGA, MYST1/MOF, NCOA6, PAXIP1/PTIP, PELP1, PHF20, PRP31, RING2, RUVB1/TIP49A, RUVB2/TIP49B, SENP3, TAF1, TAF4, TAF6, TAF7, TAF9, TEX10 and alpha- and beta-tubulin. Component of a histone methylation complex composed of at least ZNF335, RBBP5, ASH2L and WDR5; the complex may have histone H3-specific methyltransferase activity, however does not have specificity for 'Lys-4' of histone H3. Interacts with ZNF335. Interacts with ASH2L; the interaction is direct. Interacts with WDR5; the interaction is direct. Components of the ZNF335-RBBP5-ASH2L-WDR5 histone methylation complex may associate with components of a nuclear receptor-mediated transcription complex to form a complex at least composed of ZNF335, HCFC1, CCAR2, EMSY, MKI67, RBBP5, ASH2L and WDR5. Within this complex interacts with EMSY. Found in a complex with RBBP5, ASH2L, DPY30, KMT2A, KMT2D and WDR5. Interacts with SETD1A. Interacts with WDR82.

The protein localises to the nucleus. In embryonic stem (ES) cells, plays a crucial role in the differentiation potential, particularly along the neural lineage, regulating gene induction and H3 'Lys-4' methylation at key developmental loci, including that mediated by retinoic acid. Does not affect ES cell self-renewal. Component or associated component of some histone methyltransferase complexes which regulates transcription through recruitment of those complexes to gene promoters. As part of the MLL1/MLL complex, involved in mono-, di- and trimethylation at 'Lys-4' of histone H3. Histone H3 'Lys-4' methylation represents a specific tag for epigenetic transcriptional activation. In association with ASH2L and WDR5, stimulates the histone methyltransferase activities of KMT2A, KMT2B, KMT2C, KMT2D, SETD1A and SETD1B. In Mus musculus (Mouse), this protein is Retinoblastoma-binding protein 5 (Rbbp5).